The primary structure comprises 33 residues: Gastrin (33 aa).

The residue at position 1 (Gln-1) is a Pyrrolidone carboxylic acid. Residue Phe-33 is modified to Phenylalanine amide.

The protein belongs to the gastrin/cholecystokinin family.

The protein resides in the secreted. Its function is as follows. Gastrin stimulates the stomach mucosa to produce and secrete hydrochloric acid and the pancreas to secrete its digestive enzymes. It also stimulates smooth muscle contraction and increases blood circulation and water secretion in the stomach and intestine. The chain is Gastrin (GAST) from Cavia porcellus (Guinea pig).